Consider the following 1139-residue polypeptide: Protein kinase C-like (1139 aa).

The REM-1 1 domain maps to methionine 1–glycine 67. The disordered stretch occupies residues glycine 72–arginine 132. In terms of domain architecture, REM-1 2 spans lysine 142 to aspartate 219. The C2 domain occupies alanine 225–methionine 343. A disordered region spans residues valine 349 to isoleucine 404. Residues glycine 358–threonine 368 are compositionally biased toward polar residues. Phorbol-ester/DAG-type zinc fingers lie at residues glycine 454 to cysteine 502 and proline 522 to cysteine 572. 3 disordered regions span residues lysine 590 to alanine 637, glutamine 649 to alanine 668, and glutamine 679 to glycine 804. The span at glutamine 594–threonine 614 shows a compositional bias: polar residues. The span at alanine 615–glycine 629 shows a compositional bias: low complexity. Composition is skewed to pro residues over residues alanine 723–proline 734 and alanine 743–proline 760. The segment covering glycine 761–glutamine 793 has biased composition (low complexity). The Protein kinase domain occupies phenylalanine 814–phenylalanine 1073. ATP is bound by residues leucine 820–valine 828 and lysine 843. Aspartate 939 functions as the Proton acceptor in the catalytic mechanism. The AGC-kinase C-terminal domain maps to arginine 1074–aspartate 1139.

This sequence belongs to the protein kinase superfamily. AGC Ser/Thr protein kinase family. PKC subfamily.

The catalysed reaction is L-seryl-[protein] + ATP = O-phospho-L-seryl-[protein] + ADP + H(+). It catalyses the reaction L-threonyl-[protein] + ATP = O-phospho-L-threonyl-[protein] + ADP + H(+). Stimulated about twofold by phospholipids or phorbol esters. The protein is Protein kinase C-like (pkc1) of Hypocrea jecorina (Trichoderma reesei).